Here is a 563-residue protein sequence, read N- to C-terminus: Mitochondrial distribution and morphology protein 34 (563 aa).

Positions 1–195 constitute an SMP-LTD domain; the sequence is MAFNFNWSPL…LPAIIHRLSL (195 aa). Disordered regions lie at residues 298–460 and 535–563; these read ERGD…QIPT and RHDKTAREGFWSTSSNGDDAPPAYEPKAL. Polar residues-rich tracts occupy residues 303 to 332 and 346 to 357; these read AGTTTPATTSLHRPQSSLGGQSTTYTFSNR and SLVNMNSATTGL. Over residues 365–383 the composition is skewed to basic residues; sequence SRSHTTRKKKNRVVNLRKS. 2 stretches are compositionally biased toward polar residues: residues 386–402 and 444–460; these read TDNVSESGESETASITA and PSRSITPEQGNMNQIPT.

Belongs to the MDM34 family. In terms of assembly, component of the ER-mitochondria encounter structure (ERMES) or MDM complex, composed of mmm1, mdm10, mdm12 and mdm34.

It localises to the mitochondrion outer membrane. Its function is as follows. Component of the ERMES/MDM complex, which serves as a molecular tether to connect the endoplasmic reticulum (ER) and mitochondria. Components of this complex are involved in the control of mitochondrial shape and protein biogenesis, and function in nonvesicular lipid trafficking between the ER and mitochondria. Mdm34 is required for the interaction of the ER-resident membrane protein mmm1 and the outer mitochondrial membrane-resident beta-barrel protein mdm10. This is Mitochondrial distribution and morphology protein 34 from Sclerotinia sclerotiorum (strain ATCC 18683 / 1980 / Ss-1) (White mold).